Here is an 82-residue protein sequence, read N- to C-terminus: MDNKERNTLYQVVYAISGVTGEDGDELVETFKQGPMEVDKRDFFEIVQRVESLFDCTLDMNLEGPYLIHADEIVTKITKLNV.

In terms of assembly, homotetramer.

The enzyme catalyses 4-(gamma-L-glutamylamino)butanoyl-[BtrI ACP] + FMNH2 + O2 = 4-(gamma-L-glutamylamino)-(2S)-2-hydroxybutanoyl-[BtrI ACP] + FMN + H2O + H(+). It participates in antibiotic biosynthesis; butirosin biosynthesis. NAD(P)H:FMN oxidoreductase component of a two-component system involved in the biosynthesis of the side chain of the aminoglycoside antibiotics in the biosynthetic pathway of butirosin. Together with BtrO, mediates hydroxylation of gamma-L-Glu-GABA-S-BtrI. This chain is 4-(gamma-L-glutamylamino)butanoyl-[BtrI acyl-carrier protein] monooxygenase BtrO (btrV), found in Niallia circulans (Bacillus circulans).